We begin with the raw amino-acid sequence, 334 residues long: Probable tRNA pseudouridine synthase B (334 aa).

Aspartate 82 (nucleophile) is an active-site residue. One can recognise a PUA domain in the interval 250–325; it reads LPKIWIKDSA…IAVDVEKVFM (76 aa).

This sequence belongs to the pseudouridine synthase TruB family. Type 2 subfamily.

The enzyme catalyses uridine(55) in tRNA = pseudouridine(55) in tRNA. Could be responsible for synthesis of pseudouridine from uracil-55 in the psi GC loop of transfer RNAs. The polypeptide is Probable tRNA pseudouridine synthase B (Pyrococcus abyssi (strain GE5 / Orsay)).